Reading from the N-terminus, the 956-residue chain is MEEKKVDLKDTLNLPRTEFPMKANLPQREPQILEKWKGLYEKIQKERKGREVFVLHDGPPYANGHIHVGHALNKILKDVINKYNLLIGKNVNFIPGWDCHGLPIERAVEKELSKKKIKKESLPKTEFRELCREYAKKYVNIQREDFVRLGVLGDWEHPYLTMDPKYEAQEIRELGKFFERGLAYRSKKPVYWCIYDKTAEAEAEVEYYEKEDPSIYVKFPLKSGEKFGIKDKKVFAIIWTTTPWTLPANLGIMVKEDADYVLVEVEDEVWIVAKELMDKFFETVNRPEGLVLETVKGKDLVGLEYTHPFVEKEKLKGHLSEETLKNMWKIYPSEFVSLDTGTGLVHMAPGHGQEDYVVGQRYGLEPYAPVSDEGRFVEPAPEFLINVRVFDANHLIVGVLKEKGFLVHEEKIRHSYPHCWRCKNPVIFRATPQWFIGMDIEFFGKTLRQRALEEIEKVKWIPEYGKNRIKSMVENRPDWCISRQRFWGVPITVFYCENCGEIIKDREVFERVAQLVENSEKGSDVWFELTSSQLLPEGYKCPKCGGDSFTKEEDILDVWFDSGCSHAAVIRPLGFQKADLYLEGSDQHRGWFQASLLESVGSYLEAPYKAVLTHGFIVDEKGRKMSKSLGNVISPQEVVKEFGADILRLWVVSEDYTEDVKLGKNLLKKIADDYRKIRNTLRFIIGNLYDFNPRTNALPFEKLHHFDRWIISELQNLLKKVHENYEKFLFYRVHNHIKNFVITTLSAIYLDVLKDRLYVYAPASWERRSAQTALWHLLIALTTSTAPYLSFTAEELWEHVGKLDPSLPESVFLYEMPKPDENLKDEEVLKDYEILLKVRDEVMRALEVARKEKGIIKHPYEAKVYIRGDESVESLLKKYEDYLNFFFTVSQVELREGGEVQIEGEELPVKVGVNKAEGEKCPRCWIYYQKEEFVGCVCKRCAKALSEMGIELNAVC.

Residues 60-70 carry the 'HIGH' region motif; sequence PYANGHIHVGH. Glutamate 583 serves as a coordination point for L-isoleucyl-5'-AMP. The short motif at 624–628 is the 'KMSKS' region element; it reads KMSKS. Lysine 627 lines the ATP pocket. 4 residues coordinate Zn(2+): cysteine 921, cysteine 924, cysteine 938, and cysteine 941.

The protein belongs to the class-I aminoacyl-tRNA synthetase family. IleS type 1 subfamily. As to quaternary structure, monomer. The cofactor is Zn(2+).

The protein resides in the cytoplasm. The enzyme catalyses tRNA(Ile) + L-isoleucine + ATP = L-isoleucyl-tRNA(Ile) + AMP + diphosphate. In terms of biological role, catalyzes the attachment of isoleucine to tRNA(Ile). As IleRS can inadvertently accommodate and process structurally similar amino acids such as valine, to avoid such errors it has two additional distinct tRNA(Ile)-dependent editing activities. One activity is designated as 'pretransfer' editing and involves the hydrolysis of activated Val-AMP. The other activity is designated 'posttransfer' editing and involves deacylation of mischarged Val-tRNA(Ile). In Aquifex aeolicus (strain VF5), this protein is Isoleucine--tRNA ligase.